A 270-amino-acid chain; its full sequence is tRNA pseudouridine synthase A (270 aa).

Asp60 serves as the catalytic Nucleophile. Tyr118 lines the substrate pocket.

Belongs to the tRNA pseudouridine synthase TruA family. As to quaternary structure, homodimer.

It catalyses the reaction uridine(38/39/40) in tRNA = pseudouridine(38/39/40) in tRNA. Its function is as follows. Formation of pseudouridine at positions 38, 39 and 40 in the anticodon stem and loop of transfer RNAs. This chain is tRNA pseudouridine synthase A, found in Salmonella arizonae (strain ATCC BAA-731 / CDC346-86 / RSK2980).